The chain runs to 1094 residues: Probable serine/threonine-protein kinase kinX (1094 aa).

A Protein kinase domain is found at Leu22 to Leu281. Residues Ile28–Val36 and Lys49 contribute to the ATP site. Catalysis depends on Asp146, which acts as the Proton acceptor. Disordered stretches follow at residues Thr301–Asp884 and Ile946–Lys1083. A compositionally biased stretch (acidic residues) spans Tyr330 to Asp344. Over residues Ser351–Gly373 the composition is skewed to polar residues. The segment covering Gln374–Gln387 has biased composition (low complexity). The span at Asp393–Asp408 shows a compositional bias: acidic residues. Residues Asp410–Glu424 show a composition bias toward basic and acidic residues. 3 stretches are compositionally biased toward acidic residues: residues Ser433–Gln454, Asp480–Glu496, and Asp503–Glu523. Low complexity-rich tracts occupy residues Ile526–Gln542 and Arg564–Gln585. The span at Tyr587–Asp602 shows a compositional bias: acidic residues. Residues Asp603 to Gln639 show a composition bias toward basic and acidic residues. The segment covering Gln650–Gln661 has biased composition (low complexity). The span at Pro670–Glu801 shows a compositional bias: basic and acidic residues. The 40 X 9 AA approximate repeats of V-K-V-E-E-P-V-E-E stretch occupies residues Val676–Val978. Residues Pro802–Val816 show a composition bias toward acidic residues. 2 stretches are compositionally biased toward basic and acidic residues: residues Glu817 to Asp884 and Ile946 to Lys971. 2 stretches are compositionally biased toward low complexity: residues Val972 to Gln985 and Val992 to Pro1011. Residues Val1016–Ile1031 show a composition bias toward polar residues. A compositionally biased stretch (low complexity) spans Lys1032–Lys1050.

Belongs to the protein kinase superfamily. TKL Ser/Thr protein kinase family.

The enzyme catalyses L-seryl-[protein] + ATP = O-phospho-L-seryl-[protein] + ADP + H(+). It catalyses the reaction L-threonyl-[protein] + ATP = O-phospho-L-threonyl-[protein] + ADP + H(+). This Dictyostelium discoideum (Social amoeba) protein is Probable serine/threonine-protein kinase kinX (kinX).